The sequence spans 559 residues: DNA ligase (559 aa).

An ATP-binding site is contributed by E247. Catalysis depends on K249, which acts as the N6-AMP-lysine intermediate. Residues R254, R269, E299, F339, R414, and K420 each contribute to the ATP site.

This sequence belongs to the ATP-dependent DNA ligase family. It depends on Mg(2+) as a cofactor.

The catalysed reaction is ATP + (deoxyribonucleotide)n-3'-hydroxyl + 5'-phospho-(deoxyribonucleotide)m = (deoxyribonucleotide)n+m + AMP + diphosphate.. Functionally, DNA ligase that seals nicks in double-stranded DNA during DNA replication, DNA recombination and DNA repair. This is DNA ligase from Pyrococcus abyssi.